The chain runs to 728 residues: Catalase-peroxidase 1 (728 aa).

Residues 91 to 218 constitute a cross-link (tryptophyl-tyrosyl-methioninium (Trp-Tyr) (with M-244)); that stretch reads WHGAGTYRIA…LAAVQMGLIY (128 aa). Histidine 92 serves as the catalytic Proton acceptor. Positions 218-244 form a cross-link, tryptophyl-tyrosyl-methioninium (Tyr-Met) (with W-91); sequence YVNPEGPDGKPDPVAAARDIRDTFARM. Position 259 (histidine 259) interacts with heme b.

It belongs to the peroxidase family. Peroxidase/catalase subfamily. As to quaternary structure, homodimer or homotetramer. Heme b serves as cofactor. In terms of processing, formation of the three residue Trp-Tyr-Met cross-link is important for the catalase, but not the peroxidase activity of the enzyme.

The catalysed reaction is H2O2 + AH2 = A + 2 H2O. It carries out the reaction 2 H2O2 = O2 + 2 H2O. Functionally, bifunctional enzyme with both catalase and broad-spectrum peroxidase activity. This is Catalase-peroxidase 1 from Burkholderia vietnamiensis (strain G4 / LMG 22486) (Burkholderia cepacia (strain R1808)).